The following is a 443-amino-acid chain: MHRSVPEQVSAELPATLEQFQITLGADVEDRVEECVREAARCLYRGAIVQCGALGELLIDYSWEKLNARNWREVGREWRAVYSYGCLFRAVGLCSVTGSIEEALQVCDIGLLMGAEIMDNLLGRIISVLQRIAPSREETKLEAERGVREPGLESSKLHSPGEHSNKKSFASVTGRKRIREGPEADFDPKGCSISEKVPCLLVPVLDSETAIPKLHCPSLEHFRDHYLVPQKPVVLEGVIDHWPCLKKWSVEYIQRVAGCRTVPVELGSRYTDAEWSQRLMTVNEFITKYILDKQNGIGYLAQHQLFEQIPELKEDICIPDYCCLGEASEDEITINAWFGPAGTVSPLHQDPQQNFLAQIVGRKYIRVYSVAETEKLYPFDSSILHNTSQVDVESPDQNKFPRFSQASYQECILSPGQVLFIPVKWWHYIRALDLSFSVSFWWS.

Residues 139–165 are compositionally biased toward basic and acidic residues; sequence TKLEAERGVREPGLESSKLHSPGEHSN. The interval 139–174 is disordered; sequence TKLEAERGVREPGLESSKLHSPGEHSNKKSFASVTG. In terms of domain architecture, JmjC spans 298–443; the sequence is GYLAQHQLFE…LSFSVSFWWS (146 aa). Fe cation-binding residues include H348, D350, and H427.

Fe(2+) is required as a cofactor.

Its subcellular location is the nucleus. The enzyme catalyses N(6),N(6)-dimethyl-L-lysyl(36)-[histone H3] + 2 2-oxoglutarate + 2 O2 = L-lysyl(36)-[histone H3] + 2 formaldehyde + 2 succinate + 2 CO2. In terms of biological role, histone demethylase required for G2/M phase cell cycle progression. Specifically demethylates dimethylated 'Lys-36' (H3K36me2) of histone H3, an epigenetic repressive mark, thereby acting as a transcription activator. May play a role in the regulation of the circadian clock. The protein is Lysine-specific demethylase 8 (kdm8) of Xenopus tropicalis (Western clawed frog).